A 69-amino-acid chain; its full sequence is Beta-defensin 43 (69 aa).

The N-terminal stretch at 1 to 22 (MRVLFSILGVLTLLSIVPLARS) is a signal peptide. 2 cysteine pairs are disulfide-bonded: Cys29-Cys56 and Cys35-Cys49.

Belongs to the beta-defensin family.

The protein resides in the secreted. Its function is as follows. Has bactericidal activity. In Mus musculus (Mouse), this protein is Beta-defensin 43 (Defb43).